The primary structure comprises 558 residues: MPDAARKYQPYPTVGLTDRTWPNKVIDKAPIWCSVDLRDGNQALIDPMGHERKARMFGLLLDMGFKEIEIGFPSASQTDFDFARWCIEEGNVPADVSLQVLVQCRPELITRTFEALKGATNPIVHFYNSTSELQRRVVFEKDVGGIKRIATDAAKMITDMAAKAGGGYRFEYSPESFTGTELEVALEICNAVTEIVRPKPDNKLIINLPSTVEMSTPNIYADRIEWMCRNLDNRENLIISLHPHNDRGTGIATTELGLMAGADRVEGTLFGNGERTGNVDIVTLALNMYTQGVDPGIDCSDINRMKDVYEYSNQLKIPERHPYVGELVYTAFSGSHQDAINKGMKALKKANTSLWEVPYLPIDPADVGRSYEAIIRINSQSGKGGIAYVLQADYGLNLPRNLQIEFSQAIQAITDAEGKEVPAKRIHERFLETYVDQPGARLKFLDHHTYPDTAVKGRRVIEAVILDKGKEVTISGTGTGPIDGFVDALSRHVGVEMSVLDYSEHSMQRGSNASAISYVEMEYPGGKLFGAGINTNIVAASLEAVTSAANRIVGRKAR.

The 274-residue stretch at 30-303 (PIWCSVDLRD…DPGIDCSDIN (274 aa)) folds into the Pyruvate carboxyltransferase domain. Mg(2+)-binding residues include Asp39, His242, His244, and Asn278. A regulatory domain region spans residues 437 to 558 (QPGARLKFLD…ANRIVGRKAR (122 aa)).

It belongs to the alpha-IPM synthase/homocitrate synthase family. LeuA type 2 subfamily. In terms of assembly, homodimer. It depends on Mg(2+) as a cofactor.

It is found in the cytoplasm. It catalyses the reaction 3-methyl-2-oxobutanoate + acetyl-CoA + H2O = (2S)-2-isopropylmalate + CoA + H(+). It functions in the pathway amino-acid biosynthesis; L-leucine biosynthesis; L-leucine from 3-methyl-2-oxobutanoate: step 1/4. Its function is as follows. Catalyzes the condensation of the acetyl group of acetyl-CoA with 3-methyl-2-oxobutanoate (2-ketoisovalerate) to form 3-carboxy-3-hydroxy-4-methylpentanoate (2-isopropylmalate). This chain is 2-isopropylmalate synthase, found in Mesorhizobium japonicum (strain LMG 29417 / CECT 9101 / MAFF 303099) (Mesorhizobium loti (strain MAFF 303099)).